Reading from the N-terminus, the 34-residue chain is MMIFQIGWAALAAIFTFSIAMVVWGRNGDGSIDI.

Residues 3–23 traverse the membrane as a helical segment; the sequence is IFQIGWAALAAIFTFSIAMVV.

The protein belongs to the PetN family. In terms of assembly, the 4 large subunits of the cytochrome b6-f complex are cytochrome b6, subunit IV (17 kDa polypeptide, PetD), cytochrome f and the Rieske protein, while the 4 small subunits are PetG, PetL, PetM and PetN. The complex functions as a dimer.

It is found in the cellular thylakoid membrane. Functionally, component of the cytochrome b6-f complex, which mediates electron transfer between photosystem II (PSII) and photosystem I (PSI), cyclic electron flow around PSI, and state transitions. In Prochlorococcus marinus subsp. pastoris (strain CCMP1986 / NIES-2087 / MED4), this protein is Cytochrome b6-f complex subunit 8.